The chain runs to 331 residues: MLIKEYRITLPFTKEEYRLGQKYMTARKTHESSNAGDNVQLLEKSSFTDKNGVKGTFTHKVFLLKKSLPRYASAILPKSALKIEEKSWNSYPNTKTIYSCPFFGEKFYLCIESIHKDGRDEEENVFGLSKDILKKRIVDHVDIARDEVEGKDVKTDEDPRMFKSKLTGRGPLTSPNWRKEVNPAMVVYKLVTVNFNYWGFQNRVENLVQTNGLREVFLKAHRSLFCWMDEWIDLSEEQIEQFEQSTYQLMMNNTIENKLNEDIKNMNISEKKGNQQNTYSKGDFKCPNVNCQHVCSECKHMLMTTTTTTTKTVTETTTTVQSPICYRNMVC.

It belongs to the PtdIns transfer protein family. PI transfer class IIA subfamily.

Catalyzes the transfer of PtdIns and phosphatidylcholine between membranes. The protein is Phosphatidylinositol transfer protein 4 (pitD) of Dictyostelium discoideum (Social amoeba).